Reading from the N-terminus, the 586-residue chain is Mitochondrial tRNA methylthiotransferase CDK5RAP1 (586 aa).

The transit peptide at 1-30 (MHPLQRVFRAQRLSAPLTSMCWVLLRTFRA) directs the protein to the mitochondrion. The segment at 68 to 90 (ASVPQEKPSSPEVEDPPPYLSGD) is disordered. The 121-residue stretch at 97 to 217 (RKVYLETYGC…LPRLLAVVES (121 aa)) folds into the MTTase N-terminal domain. [4Fe-4S] cluster-binding residues include cysteine 106, cysteine 142, cysteine 180, cysteine 255, cysteine 259, and cysteine 262. Residues 241–495 (SPSATSAFVS…ITVFREEASK (255 aa)) enclose the Radical SAM core domain. The 76-residue stretch at 498 to 573 (ATSVGCTQLV…SQTLKGHILC (76 aa)) folds into the TRAM domain.

It belongs to the methylthiotransferase family. MiaB subfamily. As to quaternary structure, interacts with CDK5R1 (p35 form). CDK5RAP1, CDK5RAP2 and CDK5RAP3 show competitive binding to CDK5R1. Forms a complex with CDK5R1 and CDK5. It depends on [4Fe-4S] cluster as a cofactor. Expressed in brain.

The protein localises to the mitochondrion inner membrane. The catalysed reaction is N(6)-dimethylallyladenosine(37) in tRNA + (sulfur carrier)-SH + AH2 + 2 S-adenosyl-L-methionine = 2-methylsulfanyl-N(6)-dimethylallyladenosine(37) in tRNA + (sulfur carrier)-H + 5'-deoxyadenosine + L-methionine + A + S-adenosyl-L-homocysteine + 2 H(+). Its function is as follows. Methylthiotransferase that catalyzes the conversion of N6-(dimethylallyl)adenosine (i(6)A) to 2-methylthio-N6-(dimethylallyl)adenosine (ms(2)i(6)A) at position 37 (adjacent to the 3'-end of the anticodon) of four mitochondrial DNA-encoded tRNAs (Ser(UCN), Phe, Tyr and Trp). Essential for efficient and highly accurate protein translation by the ribosome. Specifically inhibits CDK5 activation by CDK5R1. Essential for efficient mitochondrial protein synthesis and respiratory chain. The polypeptide is Mitochondrial tRNA methylthiotransferase CDK5RAP1 (Cdk5rap1) (Rattus norvegicus (Rat)).